A 191-amino-acid chain; its full sequence is UPF0228 protein MM_1428 (191 aa).

This sequence belongs to the UPF0228 family.

The protein is UPF0228 protein MM_1428 of Methanosarcina mazei (strain ATCC BAA-159 / DSM 3647 / Goe1 / Go1 / JCM 11833 / OCM 88) (Methanosarcina frisia).